A 341-amino-acid chain; its full sequence is Holliday junction branch migration complex subunit RuvB (341 aa).

The segment at methionine 1–tyrosine 182 is large ATPase domain (RuvB-L). ATP contacts are provided by residues leucine 21, arginine 22, glycine 63, lysine 66, threonine 67, threonine 68, glutamate 129–tyrosine 131, arginine 172, tyrosine 182, and arginine 219. Residue threonine 67 participates in Mg(2+) binding. The small ATPAse domain (RuvB-S) stretch occupies residues threonine 183–glutamate 253. The interval asparagine 256–serine 341 is head domain (RuvB-H). DNA contacts are provided by arginine 311 and arginine 316.

Belongs to the RuvB family. In terms of assembly, homohexamer. Forms an RuvA(8)-RuvB(12)-Holliday junction (HJ) complex. HJ DNA is sandwiched between 2 RuvA tetramers; dsDNA enters through RuvA and exits via RuvB. An RuvB hexamer assembles on each DNA strand where it exits the tetramer. Each RuvB hexamer is contacted by two RuvA subunits (via domain III) on 2 adjacent RuvB subunits; this complex drives branch migration. In the full resolvosome a probable DNA-RuvA(4)-RuvB(12)-RuvC(2) complex forms which resolves the HJ.

The protein resides in the cytoplasm. The catalysed reaction is ATP + H2O = ADP + phosphate + H(+). Its function is as follows. The RuvA-RuvB-RuvC complex processes Holliday junction (HJ) DNA during genetic recombination and DNA repair, while the RuvA-RuvB complex plays an important role in the rescue of blocked DNA replication forks via replication fork reversal (RFR). RuvA specifically binds to HJ cruciform DNA, conferring on it an open structure. The RuvB hexamer acts as an ATP-dependent pump, pulling dsDNA into and through the RuvAB complex. RuvB forms 2 homohexamers on either side of HJ DNA bound by 1 or 2 RuvA tetramers; 4 subunits per hexamer contact DNA at a time. Coordinated motions by a converter formed by DNA-disengaged RuvB subunits stimulates ATP hydrolysis and nucleotide exchange. Immobilization of the converter enables RuvB to convert the ATP-contained energy into a lever motion, pulling 2 nucleotides of DNA out of the RuvA tetramer per ATP hydrolyzed, thus driving DNA branch migration. The RuvB motors rotate together with the DNA substrate, which together with the progressing nucleotide cycle form the mechanistic basis for DNA recombination by continuous HJ branch migration. Branch migration allows RuvC to scan DNA until it finds its consensus sequence, where it cleaves and resolves cruciform DNA. The polypeptide is Holliday junction branch migration complex subunit RuvB (Syntrophotalea carbinolica (strain DSM 2380 / NBRC 103641 / GraBd1) (Pelobacter carbinolicus)).